A 305-amino-acid chain; its full sequence is Phosphoribosylaminoimidazole-succinocarboxamide synthase (305 aa).

Belongs to the SAICAR synthetase family.

It carries out the reaction 5-amino-1-(5-phospho-D-ribosyl)imidazole-4-carboxylate + L-aspartate + ATP = (2S)-2-[5-amino-1-(5-phospho-beta-D-ribosyl)imidazole-4-carboxamido]succinate + ADP + phosphate + 2 H(+). It functions in the pathway purine metabolism; IMP biosynthesis via de novo pathway; 5-amino-1-(5-phospho-D-ribosyl)imidazole-4-carboxamide from 5-amino-1-(5-phospho-D-ribosyl)imidazole-4-carboxylate: step 1/2. This is Phosphoribosylaminoimidazole-succinocarboxamide synthase from Polaromonas naphthalenivorans (strain CJ2).